A 1129-amino-acid chain; its full sequence is PAN2-PAN3 deadenylation complex catalytic subunit PAN2 (1129 aa).

WD repeat units lie at residues 20-60 (PPAV…YTSY), 104-146 (PDFK…DTLP), 148-183 (DAQY…VIKV), 186-226 (GHTG…FSLK), and 280-319 (LYDS…HFPE). Residues 320–457 (YSNPTEFADH…DLHLDDVTRK (138 aa)) are linker. Positions 396–427 (RTKRRNQIEVTRQTDRSSDSLTPPKFLSEKSR) are disordered. Residues 458-830 (DVPAMYGNVE…LPSVLTFQTK (373 aa)) form the USP domain. The region spanning 880–1052 (VAIDAEFIRL…IEDATTALKL (173 aa)) is the Exonuclease domain. Aspartate 883, glutamate 885, aspartate 992, and aspartate 1045 together coordinate a divalent metal cation. The segment at 1083-1129 (APGSGNRNSMPAGMTATGAGRDTPEPMTTPKKGGAFGGVGFRSPMRR) is disordered.

This sequence belongs to the peptidase C19 family. PAN2 subfamily. Forms a heterotrimer with an asymmetric homodimer of the regulatory subunit PAN3 to form the poly(A)-nuclease (PAN) deadenylation complex. Requires a divalent metal cation as cofactor.

Its subcellular location is the cytoplasm. The enzyme catalyses Exonucleolytic cleavage of poly(A) to 5'-AMP.. Positively regulated by the regulatory subunit PAN3. In terms of biological role, catalytic subunit of the poly(A)-nuclease (PAN) deadenylation complex, one of two cytoplasmic mRNA deadenylases involved in mRNA turnover. PAN specifically shortens poly(A) tails of RNA and the activity is stimulated by poly(A)-binding protein PAB1. PAN deadenylation is followed by rapid degradation of the shortened mRNA tails by the CCR4-NOT complex. Deadenylated mRNAs are then degraded by two alternative mechanisms, namely exosome-mediated 3'-5' exonucleolytic degradation, or deadenylation-dependent mRNA decaping and subsequent 5'-3' exonucleolytic degradation by XRN1. May also be involved in post-transcriptional maturation of mRNA poly(A) tails. In Phaeosphaeria nodorum (strain SN15 / ATCC MYA-4574 / FGSC 10173) (Glume blotch fungus), this protein is PAN2-PAN3 deadenylation complex catalytic subunit PAN2.